The chain runs to 721 residues: Phosphomethylpyrimidine synthase (721 aa).

Substrate is bound by residues N256, M285, Y314, H350, 370–372, 411–414, and E450; these read SRG and DGMR. H454 is a Zn(2+) binding site. Y477 contributes to the substrate binding site. H518 is a binding site for Zn(2+). 3 residues coordinate [4Fe-4S] cluster: C598, C601, and C606.

Belongs to the ThiC family. Homodimer. [4Fe-4S] cluster serves as cofactor.

It carries out the reaction 5-amino-1-(5-phospho-beta-D-ribosyl)imidazole + S-adenosyl-L-methionine = 4-amino-2-methyl-5-(phosphooxymethyl)pyrimidine + CO + 5'-deoxyadenosine + formate + L-methionine + 3 H(+). Its pathway is cofactor biosynthesis; thiamine diphosphate biosynthesis. In terms of biological role, catalyzes the synthesis of the hydroxymethylpyrimidine phosphate (HMP-P) moiety of thiamine from aminoimidazole ribotide (AIR) in a radical S-adenosyl-L-methionine (SAM)-dependent reaction. The chain is Phosphomethylpyrimidine synthase from Shewanella oneidensis (strain ATCC 700550 / JCM 31522 / CIP 106686 / LMG 19005 / NCIMB 14063 / MR-1).